The sequence spans 284 residues: Formamidopyrimidine-DNA glycosylase (284 aa).

The active-site Schiff-base intermediate with DNA is the Pro-2. Glu-3 acts as the Proton donor in catalysis. Lys-59 functions as the Proton donor; for beta-elimination activity in the catalytic mechanism. Residues His-94 and Arg-113 each contribute to the DNA site. Residues 239–273 (KVHTKKDQPCSVCNQLIVKKKINGRGSYFCLNCQK) form an FPG-type zinc finger. Arg-263 serves as the catalytic Proton donor; for delta-elimination activity.

The protein belongs to the FPG family. Monomer. It depends on Zn(2+) as a cofactor.

It carries out the reaction Hydrolysis of DNA containing ring-opened 7-methylguanine residues, releasing 2,6-diamino-4-hydroxy-5-(N-methyl)formamidopyrimidine.. The catalysed reaction is 2'-deoxyribonucleotide-(2'-deoxyribose 5'-phosphate)-2'-deoxyribonucleotide-DNA = a 3'-end 2'-deoxyribonucleotide-(2,3-dehydro-2,3-deoxyribose 5'-phosphate)-DNA + a 5'-end 5'-phospho-2'-deoxyribonucleoside-DNA + H(+). Its function is as follows. Involved in base excision repair of DNA damaged by oxidation or by mutagenic agents. Acts as a DNA glycosylase that recognizes and removes damaged bases. Has a preference for oxidized purines, such as 7,8-dihydro-8-oxoguanine (8-oxoG). Has AP (apurinic/apyrimidinic) lyase activity and introduces nicks in the DNA strand. Cleaves the DNA backbone by beta-delta elimination to generate a single-strand break at the site of the removed base with both 3'- and 5'-phosphates. This chain is Formamidopyrimidine-DNA glycosylase (mutM), found in Mycoplasma genitalium (strain ATCC 33530 / DSM 19775 / NCTC 10195 / G37) (Mycoplasmoides genitalium).